We begin with the raw amino-acid sequence, 472 residues long: MNWMSFAPELITLTSALWFLLLSMTARSDPKREHVAALVLSALGLAACLASVGAEGYCFAGAYKVDLFSQVFKVLLAAGLFLIVTLCGELSDIEERNRREFYVLLFVCTLAMMLLVGANHFLVVFISLELSSYSLYVLVALRRDRGLGLEAGIKYFLVGIFASGVMIFGLALLYGASGIAALDGMARVLPGIIHQPAVVIGLLLTLSGFFFKLAVFPFHFWAPDAYQGAANQVSAYIATASKVAAIGVLVRVIASAGDGGTYLVHVLAVLSVVSMTVGNLAAIAQQDLKRLLAYSTVAHAGYVLIGVLSMNPAGYSAAVFYAFALLVMKFTAFLVLVEVASDGGNLRVEELAGLHRRSPILALALMVSLFSLAGIPPTVGFTGKFLVFVAAMGEGHFTLVLIAMINVVISLYYYLLVIKAAYLLEPRQELPALRVSPPLKLLSGVLVIAMVAAGFFPNQIIRVAESAAKALL.

13 consecutive transmembrane segments (helical) span residues 3-23 (WMSF…LLLS), 34-54 (HVAA…SVGA), 67-87 (LFSQ…VTLC), 106-126 (FVCT…VVFI), 156-176 (FLVG…LYGA), 198-218 (VVIG…VFPF), 233-253 (VSAY…VRVI), 263-283 (LVHV…LAAI), 291-311 (LLAY…LSMN), 317-337 (AAVF…LVLV), 360-380 (ILAL…PTVG), 398-418 (TLVL…LLVI), and 441-461 (LLSG…NQII).

It belongs to the complex I subunit 2 family. NDH-1 is composed of 14 different subunits. Subunits NuoA, H, J, K, L, M, N constitute the membrane sector of the complex.

The protein resides in the cell inner membrane. The catalysed reaction is a quinone + NADH + 5 H(+)(in) = a quinol + NAD(+) + 4 H(+)(out). NDH-1 shuttles electrons from NADH, via FMN and iron-sulfur (Fe-S) centers, to quinones in the respiratory chain. The immediate electron acceptor for the enzyme in this species is believed to be ubiquinone. Couples the redox reaction to proton translocation (for every two electrons transferred, four hydrogen ions are translocated across the cytoplasmic membrane), and thus conserves the redox energy in a proton gradient. The protein is NADH-quinone oxidoreductase subunit N 2 of Syntrophobacter fumaroxidans (strain DSM 10017 / MPOB).